We begin with the raw amino-acid sequence, 987 residues long: Valine--tRNA ligase (987 aa).

A 'HIGH' region motif is present at residues 45–55; that stretch reads PNVTGSLHMGH. Positions 634-638 match the 'KMSKS' region motif; sequence KMSKS. ATP is bound at residue Lys637. A coiled-coil region spans residues 917 to 985; it reads VIDIGAEKAR…LSAALARLSE (69 aa).

This sequence belongs to the class-I aminoacyl-tRNA synthetase family. ValS type 1 subfamily. Monomer.

The protein localises to the cytoplasm. It catalyses the reaction tRNA(Val) + L-valine + ATP = L-valyl-tRNA(Val) + AMP + diphosphate. Catalyzes the attachment of valine to tRNA(Val). As ValRS can inadvertently accommodate and process structurally similar amino acids such as threonine, to avoid such errors, it has a 'posttransfer' editing activity that hydrolyzes mischarged Thr-tRNA(Val) in a tRNA-dependent manner. This Cereibacter sphaeroides (strain ATCC 17023 / DSM 158 / JCM 6121 / CCUG 31486 / LMG 2827 / NBRC 12203 / NCIMB 8253 / ATH 2.4.1.) (Rhodobacter sphaeroides) protein is Valine--tRNA ligase.